We begin with the raw amino-acid sequence, 414 residues long: 3-oxo-isoapionate-4-phosphate transcarboxylase/hydrolase (414 aa).

Mg(2+)-binding residues include Lys-180, Asp-182, and Glu-183. N6-carboxylysine is present on Lys-180.

This sequence belongs to the RuBisCO large chain family. Requires Mg(2+) as cofactor.

The catalysed reaction is 3-oxoisoapionate 4-phosphate + H2O = (2R)-3-phosphoglycerate + glycolate + H(+). Its pathway is carbohydrate metabolism. Involved in catabolism of D-apiose. Catalyzes the conversion of 3-oxo-isoapionate 4-phosphate to 3-phosphoglycerate and glycolate. The sequence is that of 3-oxo-isoapionate-4-phosphate transcarboxylase/hydrolase from Xanthobacter autotrophicus (strain ATCC BAA-1158 / Py2).